The following is a 410-amino-acid chain: Argininosuccinate synthase (410 aa).

Position 10–18 (10–18 (AYSGGLDTS)) interacts with ATP. Positions 88 and 93 each coordinate L-citrulline. G118 serves as a coordination point for ATP. 3 residues coordinate L-aspartate: T120, N124, and D125. Residue N124 participates in L-citrulline binding. R128, S177, S186, E262, and Y274 together coordinate L-citrulline.

Belongs to the argininosuccinate synthase family. Type 1 subfamily. As to quaternary structure, homotetramer.

The protein localises to the cytoplasm. The enzyme catalyses L-citrulline + L-aspartate + ATP = 2-(N(omega)-L-arginino)succinate + AMP + diphosphate + H(+). It participates in amino-acid biosynthesis; L-arginine biosynthesis; L-arginine from L-ornithine and carbamoyl phosphate: step 2/3. The chain is Argininosuccinate synthase from Thermoanaerobacter sp. (strain X514).